The chain runs to 398 residues: Streptopain (398 aa).

The first 27 residues, 1 to 27, serve as a signal peptide directing secretion; it reads MNKKKLGIRLLSLLALGGFVLANPVFA. Positions 28-145 are excised as a propeptide; the sequence is DQNFARNEKE…TTYAGTAEIK (118 aa). The active-site Nucleophile is the Cys-192. Cys-192 carries the cysteine methyl disulfide; in zymogen form modification. Residues Ser-282 and Gly-339 each contribute to the a protein site. The active-site Proton acceptor is the His-340. The segment at 368-390 is C-terminal active site loop; that stretch reads RLDALNPSALGTGGGAGGFNGYQ.

The protein belongs to the peptidase C10 family. As to quaternary structure, monomer. Post-translationally, the mature protease is derived from the precursor sequence by cleavage, either in cis via an autocatalytic mechanism, or in trans by mature SpeB or host proteases (trypsin, plasmin or subtilisin). Maturation can involve a number of protein cleavage intermediates. Mature SpeB probably plays the most important role in protein maturation in physiological conditions. Methylthiolation at Cys-192 of the inactive zymogen form is probably involved in the mechanism of secretion of the proteinase into the culture fluid.

Its subcellular location is the secreted. It localises to the host extracellular space. The protein localises to the host cytoplasm. The catalysed reaction is Preferential cleavage with hydrophobic residues at P2, P1 and P1'.. Its activity is regulated as follows. Synthesized as an inactive zymogen to protect the intracellular components of the bacteria from proteolytic activity during protein production. Once secreted into the extracellular milieu, cleaved into the active protease: maturation can be mediated in cis by autocatalytic cleavage, or in trans by mature SpeB or host proteases. Protease activity is strongly inhibited by zinc and copper, which prevent its maturation into an active protease: inhibition by metal ions may be required to prevent proteolysis of streptococcal proteins. Functionally, cysteine protease that acts as a key streptococcal virulence factor by cleaving host proteins involved in immune response. Triggers inflammation by mediating cleavage of host proteins, which can both promote host pathogenesis by triggering sterile inflammation and/or restrict streptococcal infection, depending on host immune statue and infection site. Cleaves host gasdermin-A (GSDMA) in epithelial cells, promoting GSDMA activation and formation of gasdermin pores, triggering pyroptosis. Pyroptosis triggers the elimination of the infected skin cell, depriving the pathogen of its protective niche, while inducing an inflammatory response. This ultimately prevents bacterial penetration of the epithelial barrier and a subsequent systemic dissemination of the pathogen. Also mediates cleavage of the cytokine precursor interleukin-1 beta (IL1B) to its mature form, resulting in inflammation and septic shock. SpeB-mediated maturation of IL1B plays a dual role depending on infection site: while IL1B inflammatory response prevents bacterial growth during invasive skin infections, it promotes streptococcal infection of the nasopharynx by disrupting colonization resistance mediated by the microbiota. Inhibits host autophagy be catalyzing cleavage and inactivation of key autophagy factors, such as CALCOCO2, NBR1 and SQSTM1. Cleaves and inhibits a number of complement factors, such as C2, C3-beta chain of C3, C4, C5 or SERPING1, thereby promoting evasion of host immunity. May also impair adaptive immunity by catalyzing cleavage and degradation of host immunoglobulins to promote immune system evasion; the relevance of this activity is however unsure in vivo. Catalyzes maturation and release of the peptide hormone bradykinin from the precursor Kininogen-1 (KNG1) to produce hypotension during septic shock. Also involved in bacterial translocation across the host epithelial barrier by mediating cleavage and degradation of host epithelial junction proteins, such as CDH1 and OCLN. Additionally, has been involved in degradation of fibronectin and vitronectin, two host extracellular matrix proteins involved in tissue integrity. Also able to catalyze cleavage and degradation of streptococcal proteins, such as C5a peptidase, EndoS or SmeZ. Degradation of streptococcal proteins is however strictly regulated to preserve integrity of other virulence factors. This Streptococcus pyogenes serotype M28 (strain MGAS6180) protein is Streptopain (speB).